The primary structure comprises 278 residues: Proline-rich 28 kDa antigen homolog (278 aa).

The first 28 residues, 1 to 28 (MIQSTQTWRVLAGGLAATAMGVTVFAGG), serve as a signal peptide directing secretion.

It to M.tuberculosis Rv0040c.

The chain is Proline-rich 28 kDa antigen homolog from Mycobacterium leprae (strain TN).